A 390-amino-acid chain; its full sequence is Branched-chain-amino-acid aminotransferase (390 aa).

Lys225 bears the N6-(pyridoxal phosphate)lysine mark.

The protein belongs to the class-IV pyridoxal-phosphate-dependent aminotransferase family. Homodimer. The cofactor is pyridoxal 5'-phosphate.

It carries out the reaction L-leucine + 2-oxoglutarate = 4-methyl-2-oxopentanoate + L-glutamate. The enzyme catalyses L-isoleucine + 2-oxoglutarate = (S)-3-methyl-2-oxopentanoate + L-glutamate. The catalysed reaction is L-valine + 2-oxoglutarate = 3-methyl-2-oxobutanoate + L-glutamate. In terms of biological role, catalyzes the first reaction in the catabolism of the essential branched chain amino acids leucine, isoleucine, and valine. This Monosiga brevicollis (Choanoflagellate) protein is Branched-chain-amino-acid aminotransferase.